Consider the following 255-residue polypeptide: Thiazole synthase (255 aa).

Lys97 (schiff-base intermediate with DXP) is an active-site residue. Residues Gly158, 184 to 185 (AG), and 206 to 207 (NT) each bind 1-deoxy-D-xylulose 5-phosphate.

It belongs to the ThiG family. In terms of assembly, homotetramer. Forms heterodimers with either ThiH or ThiS.

It is found in the cytoplasm. It carries out the reaction [ThiS sulfur-carrier protein]-C-terminal-Gly-aminoethanethioate + 2-iminoacetate + 1-deoxy-D-xylulose 5-phosphate = [ThiS sulfur-carrier protein]-C-terminal Gly-Gly + 2-[(2R,5Z)-2-carboxy-4-methylthiazol-5(2H)-ylidene]ethyl phosphate + 2 H2O + H(+). It participates in cofactor biosynthesis; thiamine diphosphate biosynthesis. Catalyzes the rearrangement of 1-deoxy-D-xylulose 5-phosphate (DXP) to produce the thiazole phosphate moiety of thiamine. Sulfur is provided by the thiocarboxylate moiety of the carrier protein ThiS. In vitro, sulfur can be provided by H(2)S. This is Thiazole synthase from Acetivibrio thermocellus (strain ATCC 27405 / DSM 1237 / JCM 9322 / NBRC 103400 / NCIMB 10682 / NRRL B-4536 / VPI 7372) (Clostridium thermocellum).